Here is a 359-residue protein sequence, read N- to C-terminus: UPF0283 membrane protein Rleg2_1967 (359 aa).

Residues 1–43 (MSKPPSDPPRRPPAAFTYEDEATERHDNGRQAERRRKPESFSE) are disordered. Residues 23–40 (TERHDNGRQAERRRKPES) are compositionally biased toward basic and acidic residues. Helical transmembrane passes span 77-97 (FGKIAAGAFGILLSLGIGLWT) and 111-131 (LGYLALAVLAVGVLAVLALVI).

This sequence belongs to the UPF0283 family.

It is found in the cell inner membrane. The protein is UPF0283 membrane protein Rleg2_1967 of Rhizobium leguminosarum bv. trifolii (strain WSM2304).